Reading from the N-terminus, the 137-residue chain is Small ribosomal subunit protein uS12 (137 aa).

The interval 1-25 (MPTINQLVRQGRKSKTYKSDSPALS) is disordered. The residue at position 102 (Asp-102) is a 3-methylthioaspartic acid.

This sequence belongs to the universal ribosomal protein uS12 family. In terms of assembly, part of the 30S ribosomal subunit. Contacts proteins S8 and S17. May interact with IF1 in the 30S initiation complex.

Its function is as follows. With S4 and S5 plays an important role in translational accuracy. Interacts with and stabilizes bases of the 16S rRNA that are involved in tRNA selection in the A site and with the mRNA backbone. Located at the interface of the 30S and 50S subunits, it traverses the body of the 30S subunit contacting proteins on the other side and probably holding the rRNA structure together. The combined cluster of proteins S8, S12 and S17 appears to hold together the shoulder and platform of the 30S subunit. The polypeptide is Small ribosomal subunit protein uS12 (Finegoldia magna (strain ATCC 29328 / DSM 20472 / WAL 2508) (Peptostreptococcus magnus)).